Consider the following 350-residue polypeptide: S-adenosylmethionine:tRNA ribosyltransferase-isomerase (350 aa).

It belongs to the QueA family. Monomer.

It localises to the cytoplasm. The catalysed reaction is 7-aminomethyl-7-carbaguanosine(34) in tRNA + S-adenosyl-L-methionine = epoxyqueuosine(34) in tRNA + adenine + L-methionine + 2 H(+). Its pathway is tRNA modification; tRNA-queuosine biosynthesis. In terms of biological role, transfers and isomerizes the ribose moiety from AdoMet to the 7-aminomethyl group of 7-deazaguanine (preQ1-tRNA) to give epoxyqueuosine (oQ-tRNA). The chain is S-adenosylmethionine:tRNA ribosyltransferase-isomerase from Bacillus cereus (strain 03BB102).